Consider the following 648-residue polypeptide: Threonine--tRNA ligase (648 aa).

In terms of domain architecture, TGS spans 1-63; that stretch reads MAQISLTFPD…TQDAAIAIHT (63 aa). The catalytic stretch occupies residues 247-544; the sequence is DHRKLGREMN…LIEEHAGKLP (298 aa). The Zn(2+) site is built by C344, H395, and H521.

The protein belongs to the class-II aminoacyl-tRNA synthetase family. In terms of assembly, homodimer. The cofactor is Zn(2+).

It localises to the cytoplasm. It catalyses the reaction tRNA(Thr) + L-threonine + ATP = L-threonyl-tRNA(Thr) + AMP + diphosphate + H(+). Its function is as follows. Catalyzes the attachment of threonine to tRNA(Thr) in a two-step reaction: L-threonine is first activated by ATP to form Thr-AMP and then transferred to the acceptor end of tRNA(Thr). Also edits incorrectly charged L-seryl-tRNA(Thr). The polypeptide is Threonine--tRNA ligase (Ruegeria sp. (strain TM1040) (Silicibacter sp.)).